Consider the following 586-residue polypeptide: Proton channel OTOP1 (586 aa).

At 1–52 the chain is on the cytoplasmic side; the sequence is MVEHGGTDSMWLNKYNPAAASSASSSSSSDAENKLFSRLKVSLTKKYPQKNA. A helical membrane pass occupies residues 53–74; that stretch reads ELLSAQYGTNLLLLGVSVMLAL. Over 75-82 the chain is Extracellular; sequence AAQSGPVK. Residues 83–106 traverse the membrane as a helical segment; that stretch reads EEHLLSFITVLMLVQLVWMLCYMI. Residues 107 to 124 lie on the Cytoplasmic side of the membrane; the sequence is RRERERSPVPERDAHAGA. The helical transmembrane segment at 125 to 147 threads the bilayer; that stretch reads SWIRGGLTMLALLSLIMDAFRIG. Over 148 to 157 the chain is Extracellular; it reads YFVGYHSCIS. The chain crosses the membrane as a helical span at residues 158 to 182; it reads AALGVYPIVHALHTISQVHFLWFHI. Residues 183-190 lie on the Cytoplasmic side of the membrane; that stretch reads KDVIKKYE. Residues 191–217 form a helical membrane-spanning segment; it reads TFERFGVIHAVFTNLLLWCNGVMSETE. Residues 218–255 lie on the Extracellular side of the membrane; the sequence is HFMHNHRRRLIEMGYANLSTVDVQPHCNCTTSVCSMFS. The helical transmembrane segment at 256–281 threads the bilayer; sequence TSLYYLYPFNIEYHIFVSAMLFVMWK. The Cytoplasmic portion of the chain corresponds to 282–303; it reads NIGRTLDRHSNRKRRSTGSTGL. The chain crosses the membrane as a helical span at residues 304-326; sequence LLGPLGGLVALASSVSVLVVYLI. Topologically, residues 327-336 are extracellular; that stretch reads HLEKTEEMHE. A helical membrane pass occupies residues 337–362; that stretch reads AAVSMFYYYGVAMMACMCVGSGTGLL. The Cytoplasmic portion of the chain corresponds to 363–380; sequence VYRMENRPMDTGSNPART. Residues 381–405 form a helical membrane-spanning segment; sequence LDTELLLASSLGSWLMSWCSVVASV. At 406-417 the chain is on the extracellular side; that stretch reads AEAGQKSPSFSW. A helical transmembrane segment spans residues 418-438; the sequence is TSLTYSLLLVLEKCIQNLFIV. Residues 439-518 are Cytoplasmic-facing; that stretch reads ESLYRRHSEE…TPGRKRQILK (80 aa). The tract at residues 484 to 505 is disordered; that stretch reads PAAGSHALSRKQPDAPLPAGQR. A helical transmembrane segment spans residues 519 to 537; sequence NICMFLFMCNISLWILPAF. The Extracellular segment spans residues 538 to 555; the sequence is GCRPQYDNPLENETFGTS. The chain crosses the membrane as a helical span at residues 556-579; it reads VWTTVLNVAIPLNLFYRMHSVASL. Over 580 to 586 the chain is Cytoplasmic; it reads FEVFRKV.

The protein belongs to the otopetrin family. In terms of assembly, homodimer.

The protein resides in the cell membrane. The protein localises to the cell projection. Its subcellular location is the microvillus. It carries out the reaction H(+)(in) = H(+)(out). Its activity is regulated as follows. Activated by both acid and alkali, with proton influx in response to extracellular acid and proton efflux during alkali stimulation. Inhibited by Zn(2+); this inhibition is thought to be pH-sensitive. Currents evoked in response to mild acid (pH 6.0) stimulus may also be mildly potentiated by exposure to Zn(2+). Activated by NH(4)Cl. Its function is as follows. Proton-selective ion channel. Biphasically modulated by acid and alkali, mediating proton influx and efflux in response to extracellular acid and base stimulation, respectively. May be involved in acid and base perception. Sensor for ammonium chloride (NH(4)Cl) in taste receptor cells. NH(4)Cl acts by increasing the intracellular pH, thereby generating a driving force for proton entry through OTOP1 channel. Plays a role in the regulation of Ca(2+) flux in response to purigenic (ATP, ADP and UDP) stimuli, leading to increase in cytosolic Ca(2+) due to influx of extracellular calcium. May play this role by inhibiting P2Y purinoceptor-mediated Ca(2+) release in a Ca(2+)-dependent manner and promote an influx of Ca(2+) in response to ATP. Through this mechanism and possibly others, plays a role in the formation and function of calcium carbonate-based structures in the vestibular system of the inner ear, called otoconia, that sense gravity and linear acceleration. The sequence is that of Proton channel OTOP1 from Danio rerio (Zebrafish).